The chain runs to 399 residues: Beta-1,6-galactosyltransferase GALT31A (399 aa).

Over 1 to 12 the chain is Cytoplasmic; that stretch reads MGMGRYQKSATS. A helical; Signal-anchor for type II membrane protein membrane pass occupies residues 13-35; sequence GVSARWVFVLCISSFLLGVLVVN. Topologically, residues 36–399 are lumenal; sequence RLLASFETVD…GDGAIWHSSF (364 aa).

The protein belongs to the glycosyltransferase 31 family. Interacts with GALT29A. Mn(2+) is required as a cofactor.

It localises to the golgi apparatus membrane. Its pathway is protein modification; protein glycosylation. Functionally, beta-galactosyltransferase involved in elongation of beta-1,6-linked galactan side chains on arabinogalactan proteins. Required for the progression of embryogenesis beyond the globular stage. Beta-galactosyltransferase involved in the biosynthesis of type II arabinogalactan. Transfers galactose from UDP-galactose to a mixture of various oligosaccharides derived from arabinogalactan proteins. Forms a complex with GALT29A that can work cooperatively to enhance the activities of adding galactose residues at O6 positions to beta-1,6-linked galactan and beta-1,3-linked galactan. The protein is Beta-1,6-galactosyltransferase GALT31A of Arabidopsis thaliana (Mouse-ear cress).